A 510-amino-acid chain; its full sequence is NADH-quinone oxidoreductase subunit N (510 aa).

The next 14 membrane-spanning stretches (helical) occupy residues 14-34 (LLPEFIILGFATFLSLLDLFA), 42-62 (VIGWLSFLGTVIAAIFVIINM), 84-104 (AFKLIFLAGTAFAILISLSYL), 113-133 (GEYYYLLLTGLLGAMVMASSA), 135-155 (LITLFVGLELLSLSSYVLVGL), 170-190 (VVSGSIATAVLLFGMSYVYGL), 208-228 (MAGYQFLVYTAFAFLAVGLAF), 247-267 (PTPVTVFLAVVSKAAGFALIF), 286-306 (FFFEEGSLYLGLMAAASMIIG), 323-343 (SGIAQAGYLLVPFVPPTSLFF), 346-366 (VIFYLFGYLLVSFGAFAVIMV), 390-410 (AIAMSIFLLSLAGIPITVGFF), 426-446 (WLAAIMIITSVISYYYYFGII), and 466-486 (IWTFILIMAIATVFFGAFPGL).

It belongs to the complex I subunit 2 family. As to quaternary structure, NDH-1 is composed of 14 different subunits. Subunits NuoA, H, J, K, L, M, N constitute the membrane sector of the complex.

The protein localises to the cell membrane. It carries out the reaction a quinone + NADH + 5 H(+)(in) = a quinol + NAD(+) + 4 H(+)(out). In terms of biological role, NDH-1 shuttles electrons from NADH, via FMN and iron-sulfur (Fe-S) centers, to quinones in the respiratory chain. The immediate electron acceptor for the enzyme in this species is believed to be a menaquinone. Couples the redox reaction to proton translocation (for every two electrons transferred, four hydrogen ions are translocated across the cytoplasmic membrane), and thus conserves the redox energy in a proton gradient. This chain is NADH-quinone oxidoreductase subunit N, found in Brevibacillus brevis (strain 47 / JCM 6285 / NBRC 100599).